Reading from the N-terminus, the 486-residue chain is Monocarboxylate transporter 12 (486 aa).

Topologically, residues 1–9 are cytoplasmic; it reads MTKITRVGS. 6 helical membrane-spanning segments follow: residues 10-30, 58-78, 86-106, 115-135, 148-168, and 177-197; these read ASPP…LVTI, AWIH…GSVV, AGIM…SFAT, LGVL…AMVG, IAMS…QLLI, and LLIL…MRPI. Residues 201–220 are compositionally biased toward basic and acidic residues; it reads EDPSGPEKSHDRDAQREDCK. A disordered region spans residues 201-221; that stretch reads EDPSGPEKSHDRDAQREDCKQ. 6 helical membrane passes run 253 to 273, 289 to 309, 320 to 340, 353 to 373, 383 to 403, and 410 to 430; these read FVVL…LFVY, AFLM…FGWL, YVCY…LPML, FGYF…EIVG, VVYF…GWLV, and TAAF…LGFA. Residues 431-486 lie on the Cytoplasmic side of the membrane; the sequence is KIAKRMKRTQVPFLVKDSDPKLHLWTNGSVAYSIAKELDQKDEESLAKARTGCNLT.

It belongs to the major facilitator superfamily. Monocarboxylate porter (TC 2.A.1.13) family. In terms of assembly, interacts with isoform 2 of BSG; this interaction is required for its localization to the plasma membrane. As to expression, detected in kidney, choroid plexus, testis, lung, stomach, large and small intestine, spleen, fat and parotid gland. In eye, expressed in cornea, ciliary epithelium, lens epithelium and lens fiber.

It localises to the cell membrane. The protein resides in the basolateral cell membrane. It carries out the reaction creatine(in) = creatine(out). The enzyme catalyses guanidinoacetate(in) = guanidinoacetate(out). Its activity is regulated as follows. Creatine uptake is inhibited by carbonyl cyanide 3-chlorophenylhydrazone (CCCP) and by valinomycin. Its function is as follows. Functions as a transporter for creatine and as well for its precursor guanidinoacetate. Transport of creatine and GAA is independent of resting membrane potential and extracellular Na(+), Cl(-), or pH. Contributes to the process of creatine biosynthesis and distribution. The sequence is that of Monocarboxylate transporter 12 from Rattus norvegicus (Rat).